Reading from the N-terminus, the 247-residue chain is Peptidyl-prolyl cis-trans isomerase FKBP17-2, chloroplastic (247 aa).

A chloroplast-targeting transit peptide spans Met-1–Gly-79. Positions Gln-26–Thr-64 are disordered. The segment covering Pro-34 to Pro-51 has biased composition (pro residues). One can recognise a PPIase FKBP-type domain in the interval Gly-141–Ser-243.

It belongs to the FKBP-type PPIase family.

The protein resides in the plastid. The protein localises to the chloroplast thylakoid lumen. The enzyme catalyses [protein]-peptidylproline (omega=180) = [protein]-peptidylproline (omega=0). Its function is as follows. PPIases accelerate the folding of proteins. It catalyzes the cis-trans isomerization of proline imidic peptide bonds in oligopeptides. In Arabidopsis thaliana (Mouse-ear cress), this protein is Peptidyl-prolyl cis-trans isomerase FKBP17-2, chloroplastic (FKBP17-2).